The chain runs to 746 residues: 4-hydroxy-3-methylbut-2-en-1-yl diphosphate synthase (flavodoxin) (746 aa).

Residues C653, C656, C687, and E694 each contribute to the [4Fe-4S] cluster site.

The protein belongs to the IspG family. [4Fe-4S] cluster is required as a cofactor.

The enzyme catalyses (2E)-4-hydroxy-3-methylbut-2-enyl diphosphate + oxidized [flavodoxin] + H2O + 2 H(+) = 2-C-methyl-D-erythritol 2,4-cyclic diphosphate + reduced [flavodoxin]. It participates in isoprenoid biosynthesis; isopentenyl diphosphate biosynthesis via DXP pathway; isopentenyl diphosphate from 1-deoxy-D-xylulose 5-phosphate: step 5/6. Functionally, converts 2C-methyl-D-erythritol 2,4-cyclodiphosphate (ME-2,4cPP) into 1-hydroxy-2-methyl-2-(E)-butenyl 4-diphosphate. This is 4-hydroxy-3-methylbut-2-en-1-yl diphosphate synthase (flavodoxin) from Chlorobaculum tepidum (strain ATCC 49652 / DSM 12025 / NBRC 103806 / TLS) (Chlorobium tepidum).